A 425-amino-acid chain; its full sequence is MTAILENLAAARRAGKPAGITSVCSAHPVVLRAAIRRAAASQTAVLIEATCNQVNHLGGYTGMTPRDFVAFVNSIAAEEGLPAELLIFGGDHLGPNPWRREKAEDALTKAAAMVDAYVTAGFRKIHLDASMGCAGEPAALDDVTIAHRAAKLTAVAEKAATEAGLPKPLYILGTEVPVPGGADHVLETVAPTEPQAARNTIDLHREIFAQHGLSDAFERVIAFVVQPGVEFGSDNVVAYDPQAAQSLSAVLDGEPRLVFEAHSTDYQTEPALAALVRDGYPILKVGPGLTFAYREALYALDMIASEMVGTYGDRPLARTMEKLMLSAPGDWQGHYHGDDITLRLQRHYSYSDRIRYYWTRPEALAAVSTLHKALDGKTIPETLLRQYLGELPLAAVAGKEPEEVLVAAVDQVLATYHAATGEGRH.

This sequence belongs to the GatZ/KbaZ family.

The enzyme catalyses keto-D-tagatose 6-phosphate = keto-D-fructose 6-phosphate. Its pathway is carbohydrate metabolism. In terms of biological role, involved in galactitol and D-altritol catabolism. Catalyzes the epimerization of D-tagatose 6-phosphate to D-fructose 6-phosphate. The sequence is that of D-tagatose 6-phosphate 4-epimerase from Agrobacterium fabrum (strain C58 / ATCC 33970) (Agrobacterium tumefaciens (strain C58)).